Reading from the N-terminus, the 33-residue chain is Cytochrome b6-f complex subunit 8 (33 aa).

Residues 2–22 (LFTFAWASLAAIFTFSIAMVV) form a helical membrane-spanning segment.

This sequence belongs to the PetN family. In terms of assembly, the 4 large subunits of the cytochrome b6-f complex are cytochrome b6, subunit IV (17 kDa polypeptide, PetD), cytochrome f and the Rieske protein, while the 4 small subunits are PetG, PetL, PetM and PetN. The complex functions as a dimer.

It is found in the cellular thylakoid membrane. Component of the cytochrome b6-f complex, which mediates electron transfer between photosystem II (PSII) and photosystem I (PSI), cyclic electron flow around PSI, and state transitions. This is Cytochrome b6-f complex subunit 8 from Prochlorococcus marinus (strain MIT 9211).